A 282-amino-acid polypeptide reads, in one-letter code: Ribosome biogenesis GTPase A (282 aa).

Residues 14 to 178 enclose the CP-type G domain; sequence RREVTEKLKL…LLDTPGILWP (165 aa). GTP is bound by residues 58–61, 86–87, 130–135, and G174; these read NKAD, NS, and NVGKST.

Belongs to the TRAFAC class YlqF/YawG GTPase family. MTG1 subfamily. Interacts with ctc. Interacts with the immature 50S ribosome subunit. 2 molecules of rbgA bind to one 50S subunit.

It is found in the cytoplasm. Essential protein that is required for a late step of 50S ribosomal subunit assembly. Has GTPase activity that is stimulated by interaction with the immature 50S ribosome subunit. Binds to the 23S rRNA. Required for the association of ribosomal proteins rplP and rpmA with the large subunit. This Bacillus spizizenii (strain ATCC 23059 / NRRL B-14472 / W23) (Bacillus subtilis subsp. spizizenii) protein is Ribosome biogenesis GTPase A (rbgA).